We begin with the raw amino-acid sequence, 793 residues long: Cation channel sperm-associated auxiliary subunit delta (793 aa).

The N-terminal stretch at 1 to 20 is a signal peptide; the sequence is MLMLMLVAAVTMWLRPLVTA. Over 21–725 the chain is Extracellular; sequence QPLCRARTVR…AFPVQLVSAG (705 aa). 7 disulfides stabilise this stretch: Cys-24/Cys-370, Cys-60/Cys-146, Cys-145/Cys-153, Cys-388/Cys-497, Cys-511/Cys-703, Cys-526/Cys-573, and Cys-625/Cys-653. A glycan (N-linked (GlcNAc...) asparagine) is linked at Asn-128. N-linked (GlcNAc...) asparagine glycosylation is found at Asn-231, Asn-241, Asn-473, Asn-539, and Asn-631. Residues 726–747 traverse the membrane as a helical segment; sequence VVMVLLISSILGSVWLAYMIPR. Residues 748 to 793 are Cytoplasmic-facing; sequence LLRTARGRRMTSFVAQLYGRCKTVCQFRASATARTGSKPMGRHRSS.

This sequence belongs to the CATSPERD family. Component of the CatSper complex or CatSpermasome composed of the core pore-forming members CATSPER1, CATSPER2, CATSPER3 and CATSPER4 as well as auxiliary members CATSPERB, CATSPERG, CATSPERD, CATSPERE, CATSPERZ, C2CD6/CATSPERT, TMEM249, TMEM262 and EFCAB9. HSPA1 may be an additional auxiliary complex member. The core complex members CATSPER1, CATSPER2, CATSPER3 and CATSPER4 form a heterotetrameric channel. The auxiliary CATSPERB, CATSPERG, CATSPERD and CATSPERE subunits form a pavilion-like structure over the pore which stabilizes the complex through interactions with CATSPER4, CATSPER3, CATSPER1 and CATSPER2 respectively. TMEM262/CATSPERH interacts with CATSPERB, further stabilizing the complex. C2CD6/CATSPERT interacts at least with CATSPERD and is required for targeting the CatSper complex in the flagellar membrane.

It localises to the cell projection. The protein localises to the cilium. It is found in the flagellum membrane. Functionally, auxiliary component of the CatSper complex, a complex involved in sperm cell hyperactivation. Sperm cell hyperactivation is needed for sperm motility which is essential late in the preparation of sperm for fertilization. Required for CATSPER1 stability before intraflagellar transport and/or incorporation of the CatSper complex channel into the flagellar membrane. The chain is Cation channel sperm-associated auxiliary subunit delta from Macaca fascicularis (Crab-eating macaque).